A 260-amino-acid polypeptide reads, in one-letter code: Cytosolic Fe-S cluster assembly factor Nubp2 homolog (260 aa).

Gly-14 to Ser-21 provides a ligand contact to ATP. 2 residues coordinate [4Fe-4S] cluster: Cys-188 and Cys-191.

Belongs to the Mrp/NBP35 ATP-binding proteins family. NUBP2/CFD1 subfamily. Heterotetramer of 2 Nubp1 and 2 Nubp2 chains. [4Fe-4S] cluster serves as cofactor.

It localises to the cytoplasm. Its function is as follows. Component of the cytosolic iron-sulfur (Fe/S) protein assembly (CIA) machinery. Required for maturation of extramitochondrial Fe-S proteins. The Nubp1-Nubp2 heterotetramer forms a Fe-S scaffold complex, mediating the de novo assembly of an Fe-S cluster and its transfer to target apoproteins. The sequence is that of Cytosolic Fe-S cluster assembly factor Nubp2 homolog from Drosophila sechellia (Fruit fly).